We begin with the raw amino-acid sequence, 276 residues long: Phosphate import ATP-binding protein PstB 2 (276 aa).

The region spanning 22–262 (MAAVNLTLGF…PKHAETARYV (241 aa)) is the ABC transporter domain. 54-61 (GPTGSGKT) lines the ATP pocket.

It belongs to the ABC transporter superfamily. Phosphate importer (TC 3.A.1.7) family. The complex is composed of two ATP-binding proteins (PstB), two transmembrane proteins (PstC and PstA) and a solute-binding protein (PstS).

The protein resides in the cell membrane. It carries out the reaction phosphate(out) + ATP + H2O = ADP + 2 phosphate(in) + H(+). Functionally, part of the ABC transporter complex PstSACB involved in phosphate import. Responsible for energy coupling to the transport system. This is Phosphate import ATP-binding protein PstB 2 from Mycobacterium bovis (strain ATCC BAA-935 / AF2122/97).